A 134-amino-acid polypeptide reads, in one-letter code: Phosphoribosyl-AMP cyclohydrolase (134 aa).

A Mg(2+)-binding site is contributed by D93. C94 serves as a coordination point for Zn(2+). The Mg(2+) site is built by D95 and D97. Positions 112 and 119 each coordinate Zn(2+).

It belongs to the PRA-CH family. Homodimer. Mg(2+) serves as cofactor. It depends on Zn(2+) as a cofactor.

The protein resides in the cytoplasm. It carries out the reaction 1-(5-phospho-beta-D-ribosyl)-5'-AMP + H2O = 1-(5-phospho-beta-D-ribosyl)-5-[(5-phospho-beta-D-ribosylamino)methylideneamino]imidazole-4-carboxamide. The protein operates within amino-acid biosynthesis; L-histidine biosynthesis; L-histidine from 5-phospho-alpha-D-ribose 1-diphosphate: step 3/9. Functionally, catalyzes the hydrolysis of the adenine ring of phosphoribosyl-AMP. The chain is Phosphoribosyl-AMP cyclohydrolase from Caulobacter sp. (strain K31).